The chain runs to 440 residues: Glutamate-1-semialdehyde 2,1-aminomutase (440 aa).

Residue K271 is modified to N6-(pyridoxal phosphate)lysine.

It belongs to the class-III pyridoxal-phosphate-dependent aminotransferase family. HemL subfamily. In terms of assembly, homodimer. Pyridoxal 5'-phosphate serves as cofactor.

Its subcellular location is the cytoplasm. It carries out the reaction (S)-4-amino-5-oxopentanoate = 5-aminolevulinate. The protein operates within porphyrin-containing compound metabolism; protoporphyrin-IX biosynthesis; 5-aminolevulinate from L-glutamyl-tRNA(Glu): step 2/2. The polypeptide is Glutamate-1-semialdehyde 2,1-aminomutase (Chlamydia pneumoniae (Chlamydophila pneumoniae)).